A 326-amino-acid polypeptide reads, in one-letter code: Ribosomal large subunit pseudouridine synthase D (326 aa).

Positions Gln18 to Asp91 constitute an S4 RNA-binding domain. Asp139 is a catalytic residue. The tract at residues Gly183–Pro203 is disordered.

It belongs to the pseudouridine synthase RluA family.

The protein resides in the cytoplasm. The catalysed reaction is uridine(1911/1915/1917) in 23S rRNA = pseudouridine(1911/1915/1917) in 23S rRNA. Responsible for synthesis of pseudouridine from uracil at positions 1911, 1915 and 1917 in 23S ribosomal RNA. This is Ribosomal large subunit pseudouridine synthase D (rluD) from Salmonella typhi.